Consider the following 207-residue polypeptide: Transcriptional regulator YqjI (207 aa).

Residues 1-40 (MSHHHEGCCKHEGQPRHEGCCKGEKSEHEHCGHGHQHEHG) show a composition bias toward basic and acidic residues. The interval 1–46 (MSHHHEGCCKHEGQPRHEGCCKGEKSEHEHCGHGHQHEHGQCCGGR) is disordered.

As to quaternary structure, oligomer (probable predominant form) and monomer.

Divalent metals such as nickel and iron have a similar negative effect on YqjI DNA-binding activity. In terms of biological role, represses the expression of YqjH which is involved in iron homeostasis under excess nickel conditions. Also represses its own expression. This is Transcriptional regulator YqjI (yqjI) from Escherichia coli (strain K12).